We begin with the raw amino-acid sequence, 192 residues long: MLEKVYVALIHYPIKGKDGSIISTAVTNLDVHDIARTARTYNLKGYYIVTNLRAQQDMVSKMLKFWREGFGSRYNPSRAESLKLVKLKSYLEDVLEDIESVEGERPLIFFTSAKKRENDISFEEGRRIIIETEKPVLILLGTGWGLPDEILEISDYVLEPIRAQSDFNHLSVRAAAAIIIDRLIGENYARRD.

This sequence to A.aeolicus AQ_054.

This is an uncharacterized protein from Thermotoga maritima (strain ATCC 43589 / DSM 3109 / JCM 10099 / NBRC 100826 / MSB8).